Here is a 530-residue protein sequence, read N- to C-terminus: Phosphoenolpyruvate carboxykinase (ATP) (530 aa).

Positions 57, 193, and 199 each coordinate substrate. ATP contacts are provided by residues lysine 199, histidine 218, and glycine 234–threonine 242. Mn(2+) is bound by residues lysine 199 and histidine 218. Aspartate 255 lines the Mn(2+) pocket. Residues glutamate 283, arginine 320, and threonine 445 each contribute to the ATP site. Residue arginine 320 participates in substrate binding.

It belongs to the phosphoenolpyruvate carboxykinase (ATP) family. Mn(2+) serves as cofactor.

The protein localises to the cytoplasm. It catalyses the reaction oxaloacetate + ATP = phosphoenolpyruvate + ADP + CO2. The protein operates within carbohydrate biosynthesis; gluconeogenesis. Involved in the gluconeogenesis. Catalyzes the conversion of oxaloacetate (OAA) to phosphoenolpyruvate (PEP) through direct phosphoryl transfer between the nucleoside triphosphate and OAA. The polypeptide is Phosphoenolpyruvate carboxykinase (ATP) (Leptospira biflexa serovar Patoc (strain Patoc 1 / Ames)).